The following is a 337-amino-acid chain: uncharacterized protein (337 aa).

Transmembrane regions (helical) follow at residues 4 to 24 (FIFF…FSLI) and 26 to 46 (LLLW…LFVL).

It belongs to the plectrovirus ORF2 family.

The protein localises to the host membrane. This is an uncharacterized protein from Spiroplasma virus SpV1-R8A2 B (SpV1).